The sequence spans 390 residues: Probable purine permease 18 (390 aa).

A compositionally biased stretch (polar residues) spans 1 to 14; sequence MEMTEASKQTTAEG. The interval 1–23 is disordered; that stretch reads MEMTEASKQTTAEGSANPEPDQI. The residue at position 25 (S25) is a Phosphoserine. 10 consecutive transmembrane segments (helical) span residues 39–59, 81–101, 120–140, 148–168, 176–196, 211–231, 250–270, 297–317, 324–344, and 348–368; these read ISVSLCIFLVLLGDSLVMLLL, WLQALVQNAAFPLLIPLFFIF, LILLYISLGVLVAAHSKLFAL, GVFTLISATQLIFTAIFAAII, WIILSIIGSILIYVFGSPEFG, WLTFAASVAFALSLCLFQLCF, VIEMQICVSFVATVVCLVGLF, IGLALSWQVWAVGLMGLVLYV, VVHMCTSPLVALFVVLAFDFM, and FSWPRIGTLIATVVALGSYFY.

This sequence belongs to the purine permeases (TC 2.A.7.14) family.

Its subcellular location is the membrane. The chain is Probable purine permease 18 (PUP18) from Arabidopsis thaliana (Mouse-ear cress).